We begin with the raw amino-acid sequence, 2063 residues long: Nuclear receptor coactivator 6 (2063 aa).

A TBP/GTF2A-binding region region spans residues 1-928; the sequence is MVLDDLPNLE…PPRKKKNSQQ (928 aa). The tract at residues 1-1057 is CREBBP-binding region; that stretch reads MVLDDLPNLE…LPVSQNVHPP (1057 aa). The NCOA1-binding region stretch occupies residues 1–1310; sequence MVLDDLPNLE…QTHKLDSVVV (1310 aa). An Asymmetric dimethylarginine modification is found at Arg95. 3 disordered regions span residues 184-251, 281-549, and 789-811; these read IPPG…VNRQ, QQQQ…APQL, and RPPG…ANND. Residues 281 to 300 show a composition bias toward low complexity; it reads QQQQQLQARPPQQHQQQQPQ. Composition is skewed to polar residues over residues 353–368, 379–406, 417–453, 462–502, and 522–549; these read MQQQ…TVQT, GSQQ…QMKS, PLQQ…QQQM, PLPQ…QGPQ, and GQAN…APQL. The interval 773–927 is NCOA6IP-binding region; the sequence is VNNSPSQVMG…KPPRKKKNSQ (155 aa). Ser884 bears the Phosphoserine; by MAPK; in vitro mark. The LXXLL motif 1 signature appears at 887 to 891; it reads LVNLL. Disordered stretches follow at residues 899 to 1278, 1310 to 1353, and 1448 to 1474; these read HFGV…LNPT, VNSG…KAPK, and EVKM…PSVE. Over residues 903-912 the composition is skewed to low complexity; that stretch reads NNKQNNTNAN. Residues 913 to 925 show a composition bias toward basic residues; sequence KPKKKKPPRKKKN. Positions 982–992 are enriched in low complexity; the sequence is PLQQMPPQLMQ. A compositionally biased stretch (pro residues) spans 995-1020; that stretch reads APPPQPPQQQPQPQLPQQQQPPPPSQ. Over residues 1021–1041 the composition is skewed to low complexity; it reads PQSQQQQQQQQQMMMMLMMQQ. Residues Arg1047 and Arg1058 each carry the asymmetric dimethylarginine modification. The segment covering 1063 to 1075 has biased composition (polar residues); the sequence is PDSQRMPMQQSGS. Arg1096 carries the asymmetric dimethylarginine modification. 3 stretches are compositionally biased toward polar residues: residues 1104 to 1125, 1173 to 1191, and 1202 to 1214; these read PLGS…SSSP, LSAT…SLPS, and APTQ…TPNR. Over residues 1219–1232 the composition is skewed to pro residues; the sequence is PYYPQTPNNRPPST. Residues 1310–1320 are compositionally biased toward polar residues; the sequence is VNSGKQSNSGA. Residues 1322-1345 are compositionally biased toward low complexity; it reads KRASPSNSRRSSPGSSRKTTPSPG. The LXXLL motif 2 motif lies at 1491–1495; sequence LSQLL. The tract at residues 1641–2063 is EP300/CRSP3-binding region; sequence SEGQSAAQSN…AVQSKRRKSK (423 aa). The segment at 1738–1820 is disordered; the sequence is ATPVQLPSPP…VSSSKGKGKV (83 aa). Over residues 1750–1763 the composition is skewed to low complexity; the sequence is SSPVVPSHPPVQQV. A compositionally biased stretch (polar residues) spans 1773-1798; the sequence is PQVNTSADQNTLPSSQSTTMVSPLLT. Positions 1799–1815 are enriched in low complexity; the sequence is NSPGSSGNRRSPVSSSK. 2 positions are modified to N6-acetyllysine: Lys1819 and Lys1822. Disordered regions lie at residues 1837–1908 and 1995–2063; these read GSLE…LPGG and IVSG…RKSK. Basic and acidic residues predominate over residues 2002-2011; sequence EPKEIVEKSK. Residue Ser2018 is modified to Phosphoserine.

In terms of assembly, monomer and homodimer. Interacts with RBM39. Interacts in vitro with the basal transcription factors GTF2A and TBP, suggesting an autonomous transactivation function. Interacts with NCOA1, CRSP3, RBM14, the histone acetyltransferases EP300 and CREBBP, and with the methyltransferases NCOA6IP and PRMT2/HRMT1L1. Component of the MLL2/3 complex (also named ASCOM complex), at least composed of KMT2D/MLL2 or KMT2C/MLL3, ASH2L, RBBP5, WDR5, NCOA6, DPY30, KDM6A, PAXIP1/PTIP, PAGR1 and alpha- and beta-tubulin. Interacts with ZNF335; may enhance ligand-dependent transcriptional activation by nuclear hormone receptors. In terms of processing, phosphorylated by PRKDC. Post-translationally, phosphorylation on Ser-884 leads to a strong decrease in binding to ESR1 and ESR2. Ubiquitous. Highly expressed in brain, prostate, testis and ovary; weakly expressed in lung, thymus and small intestine.

Its subcellular location is the nucleus. Its function is as follows. Nuclear receptor coactivator that directly binds nuclear receptors and stimulates the transcriptional activities in a hormone-dependent fashion. Coactivates expression in an agonist- and AF2-dependent manner. Involved in the coactivation of different nuclear receptors, such as for steroids (GR and ERs), retinoids (RARs and RXRs), thyroid hormone (TRs), vitamin D3 (VDR) and prostanoids (PPARs). Probably functions as a general coactivator, rather than just a nuclear receptor coactivator. May also be involved in the coactivation of the NF-kappa-B pathway. May coactivate expression via a remodeling of chromatin and its interaction with histone acetyltransferase proteins. The chain is Nuclear receptor coactivator 6 (NCOA6) from Homo sapiens (Human).